The sequence spans 352 residues: E3 ubiquitin-protein ligase RNF146 (352 aa).

The segment at 36-74 (CAICLQTCVHPVSLPCKHVFCYLCVKGASWLGKRCALCR) adopts an RING-type zinc-finger fold. Residues lysine 84 and lysine 94 each participate in a glycyl lysine isopeptide (Lys-Gly) (interchain with G-Cter in ubiquitin) cross-link. The WWE domain occupies 91 to 167 (EELKAASRGN…EHGRRRKIKR (77 aa)). Tyrosine 107, arginine 110, and tryptophan 114 together coordinate a glycoprotein. A Glycyl lysine isopeptide (Lys-Gly) (interchain with G-Cter in ubiquitin) cross-link involves residue lysine 130. A glycoprotein contacts are provided by tyrosine 144, glutamine 153, arginine 163, and lysine 175. Residue lysine 175 forms a Glycyl lysine isopeptide (Lys-Gly) (interchain with G-Cter in ubiquitin) linkage. Disordered stretches follow at residues 195–242 (SSAD…AGAS), 259–293 (ERSH…ASSD), and 317–352 (NQTV…VTEV). Low complexity predominate over residues 197 to 210 (ADGADSGSAHTGAS). Over residues 215–233 (VPSSTRPLTSVDGQLTSPV) the composition is skewed to polar residues. Residues 282–293 (STEETESDASSD) are compositionally biased toward acidic residues. Phosphoserine is present on residues serine 288 and serine 292.

Can form homooligomers. Interacts with PARsylated AXIN1, AXIN2, BLZF1, CASC3, H1-2, IPO7, LIG3, NCL, PARP1, XRCC1, XRCC5 and XRCC6. Interacts with DDB1, DHX15, IQGAP1, LRPPRC, PARP2, PRKDC, RUVBL2, TNKS1 and TNKS2. Binding often leads to interactor ubiquitination, in the presence of the appropriate E1 and E2 enzymes, and proteasomal degradation. In terms of processing, ubiquitinated; autoubiquitinated. Autoubiquitination is enhanced upon poly(ADP-ribose)-binding.

Its subcellular location is the cytoplasm. It is found in the cytosol. The protein resides in the nucleus. It carries out the reaction S-ubiquitinyl-[E2 ubiquitin-conjugating enzyme]-L-cysteine + [acceptor protein]-L-lysine = [E2 ubiquitin-conjugating enzyme]-L-cysteine + N(6)-ubiquitinyl-[acceptor protein]-L-lysine.. It functions in the pathway protein modification; protein ubiquitination. E3 ubiquitin-protein ligase that specifically binds poly-ADP-ribosylated (PARsylated) proteins and mediates their ubiquitination and subsequent degradation. May regulate many important biological processes, such as cell survival and DNA damage response. Acts as an activator of the Wnt signaling pathway by mediating the ubiquitination of PARsylated AXIN1 and AXIN2, 2 key components of the beta-catenin destruction complex. Acts in cooperation with tankyrase proteins (TNKS and TNKS2), which mediate PARsylation of target proteins AXIN1, AXIN2, BLZF1, CASC3, TNKS and TNKS2. Recognizes and binds tankyrase-dependent PARsylated proteins via its WWE domain and mediates their ubiquitination, leading to their degradation. Different ubiquitin linkage types have been observed: TNKS2 undergoes ubiquitination at 'Lys-48' and 'Lys-63', while AXIN1 is only ubiquitinated at 'Lys-48'. May regulate TNKS and TNKS2 subcellular location, preventing aggregation at a centrosomal location. Neuroprotective protein. Protects the brain against N-methyl-D-aspartate (NMDA) receptor-mediated glutamate excitotoxicity and ischemia, by interfering with PAR-induced cell death, called parthanatos. Prevents nuclear translocation of AIFM1 in a PAR-binding dependent manner. Does not affect PARP1 activation. Protects against cell death induced by DNA damaging agents, such as N-methyl-N-nitro-N-nitrosoguanidine (MNNG) and rescues cells from G1 arrest. Promotes cell survival after gamma-irradiation. Facilitates DNA repair. The protein is E3 ubiquitin-protein ligase RNF146 (Rnf146) of Rattus norvegicus (Rat).